The following is a 203-amino-acid chain: Glycerol-3-phosphate acyltransferase (203 aa).

Helical transmembrane passes span 4-24 (IAPG…AILV), 56-76 (VAVL…AYML), 80-100 (PFWL…PVFF), 112-132 (FGAI…TWLL), and 138-158 (GYSS…VWWF).

The protein belongs to the PlsY family. As to quaternary structure, probably interacts with PlsX.

The protein localises to the cell inner membrane. It carries out the reaction an acyl phosphate + sn-glycerol 3-phosphate = a 1-acyl-sn-glycero-3-phosphate + phosphate. The protein operates within lipid metabolism; phospholipid metabolism. Its function is as follows. Catalyzes the transfer of an acyl group from acyl-phosphate (acyl-PO(4)) to glycerol-3-phosphate (G3P) to form lysophosphatidic acid (LPA). This enzyme utilizes acyl-phosphate as fatty acyl donor, but not acyl-CoA or acyl-ACP. This chain is Glycerol-3-phosphate acyltransferase, found in Enterobacter sp. (strain 638).